Consider the following 184-residue polypeptide: Homeobox protein LOX10 (184 aa).

Disordered stretches follow at residues K1–H29 and Y129–G184. The segment at residues R76–K135 is a DNA-binding region (homeobox). Low complexity-rich tracts occupy residues N140–T161 and S174–G184.

Belongs to the NK-2 homeobox family. In terms of tissue distribution, expressed in a segmental pattern in the endoderm and in the cephalic nervous system.

The protein localises to the nucleus. Its function is as follows. May play a role in patterning the gut. The polypeptide is Homeobox protein LOX10 (LOX10) (Helobdella triserialis (Leech)).